We begin with the raw amino-acid sequence, 246 residues long: Transmembrane and ubiquitin-like domain-containing protein 1 (246 aa).

Residues 2–30 (TLIEGVGDEVTVLFSVLACLLVLALAWVS) are required to release iHOPS from membranes. Residues 11–31 (VTVLFSVLACLLVLALAWVST) traverse the membrane as a helical segment. The interval 34 to 101 (AEGGDPLPQP…TPPAPDSPQE (68 aa)) is disordered. Pro residues predominate over residues 40-50 (LPQPSGTPTPS). Position 71 is a phosphothreonine (Thr71). Ser73 is subject to Phosphoserine. Position 92 is a phosphothreonine (Thr92). Phosphoserine is present on residues Ser98 and Ser127. A Ubiquitin-like domain is found at 103–176 (LVLRLKFLND…LHCHVSTRVG (74 aa)). The next 2 helical transmembrane spans lie at 195 to 215 (IGSLLLPLLLLLLLLLWYCQI) and 221 to 241 (FPLTATLGLAGFTLLLSLLAF).

As to quaternary structure, interacts with EEF1A1, GRIA2, GRIP1, CAMLG, TUBG1. Interacts with NPM1 and CDKN2A; TMUB1 can enhance interaction between NPM1 and CDKN2A and is proposed to bridge the proteins; proposed to be mediated by iHOPS. Interacts with ERLIN2 and AMFR; TMUB1 promotes the interaction of ERLIN2 with AMFR. In terms of processing, processed by regulated intramembrane proteolysis (RIP)in the N-terminus to release iHOPS from membranes. Ubiquitously expressed with highest levels in mammary and thyroid glands, bone marrow and spleen; limited expression in cardiac, pancreatic and ovarian tissues.

The protein localises to the membrane. It localises to the postsynaptic cell membrane. Its subcellular location is the recycling endosome. It is found in the cytoplasm. The protein resides in the nucleus. The protein localises to the nucleolus. It localises to the cytoskeleton. Its subcellular location is the microtubule organizing center. It is found in the centrosome. Involved in sterol-regulated ubiquitination and degradation of HMG-CoA reductase HMGCR. Involved in positive regulation of AMPA-selective glutamate receptor GRIA2 recycling to the cell surface. Acts as a negative regulator of hepatocyte growth during regeneration. Functionally, may contribute to the regulation of translation during cell-cycle progression. May contribute to the regulation of cell proliferation. May be involved in centrosome assembly. Modulates stabilization and nucleolar localization of tumor suppressor CDKN2A and enhances association between CDKN2A and NPM1. The protein is Transmembrane and ubiquitin-like domain-containing protein 1 (TMUB1) of Homo sapiens (Human).